The sequence spans 210 residues: Protoporphyrinogen IX oxidase (210 aa).

The next 5 helical transmembrane spans lie at 22–42 (WFKA…FYLV), 74–94 (YNII…GLIF), 103–123 (GWLH…FYCG), 141–161 (FRAL…LAVF), and 165–185 (LPLD…AASI). Histidine 27 lines the heme pocket. Position 108 (lysine 108) interacts with heme.

This sequence belongs to the HemJ family. As to quaternary structure, homodimer. Can also form higher oligomers, most probably tetramers. Interacts with Sll1106, however it is unlikely that Sll1106 is required for PPO function. Heme b serves as cofactor.

It localises to the cell membrane. The catalysed reaction is protoporphyrinogen IX + 3 A = protoporphyrin IX + 3 AH2. It functions in the pathway porphyrin-containing compound metabolism; protoporphyrin-IX biosynthesis; protoporphyrin-IX from protoporphyrinogen-IX: step 1/1. In terms of biological role, catalyzes the oxidation of protoporphyrinogen IX to protoporphyrin IX. Is involved in the biosynthesis of tetrapyrrole molecules like heme and chlorophyll. Does not use oxygen or artificial electron acceptors such as menadione or benzoquinone. Is functionally coupled with coproporphyrinogen III oxidase (CPO). Is essential for growth. This chain is Protoporphyrinogen IX oxidase, found in Synechocystis sp. (strain ATCC 27184 / PCC 6803 / Kazusa).